The sequence spans 436 residues: MRQALPLVTRQGDRIAIVSGLRTPFARQATAFHGIPAVDLGKMVVGELLARSEIPADAIEQLVFGQVVQMPEAPNIAREIVLGTGMNVHTDAYSVSRACATSFQAVANVAESLMAGTIRAGIAGGADSSSVLPIGVSKALARVLVDVNKARTTRQRLTLFSRLRLRDLLPVPPAVAEYSTGLRMGDTAEQMAKTYGITREQQDALAHRSHQRAAQAWAEGKLAEEVMTTYVPPYKNPFAEDNNIRGASTLADYAKLRPAFDRKHGSVTAANSTPLTDGAAAVIMMTESRAKELGLRPLGYLRSYAFTAIDVWQDMLLGPAWSTPLALERAGLTMADLTLFDMHEAFAAQTLANLQLLGSERFAREVLGRAQATGEVDDAKFNVLGGSIAYGHPFAATGARMITQTLHELRRRGGGFGLVTACAAGGLGAAMVLEAE.

Residue Cys99 is the Acyl-thioester intermediate of the active site. Active-site proton acceptor residues include His392 and Cys422.

The protein belongs to the thiolase-like superfamily. Thiolase family. As to quaternary structure, heterotetramer of two alpha chains (FadJ) and two beta chains (FadI).

It localises to the cytoplasm. It catalyses the reaction an acyl-CoA + acetyl-CoA = a 3-oxoacyl-CoA + CoA. Its pathway is lipid metabolism; fatty acid beta-oxidation. Its function is as follows. Catalyzes the final step of fatty acid oxidation in which acetyl-CoA is released and the CoA ester of a fatty acid two carbons shorter is formed. The sequence is that of 3-ketoacyl-CoA thiolase from Salmonella dublin (strain CT_02021853).